Reading from the N-terminus, the 378-residue chain is Putative glutamate--cysteine ligase 2 (378 aa).

It belongs to the glutamate--cysteine ligase type 2 family. YbdK subfamily.

It carries out the reaction L-cysteine + L-glutamate + ATP = gamma-L-glutamyl-L-cysteine + ADP + phosphate + H(+). Functionally, ATP-dependent carboxylate-amine ligase which exhibits weak glutamate--cysteine ligase activity. This is Putative glutamate--cysteine ligase 2 from Pseudomonas paraeruginosa (strain DSM 24068 / PA7) (Pseudomonas aeruginosa (strain PA7)).